The following is a 387-amino-acid chain: MRVAMMTREYPPEVYGGAGVHVTELVAQLRKLCDVDVHCMGAPRDGAYVAHPDPTLRGANAALTMLSADLNMVNNAEAATVVHSHTWYTGLAGHLASLLYGVPHVLTAHSLEPLRPWKAEQLGGGYQVSSWVERTAVEAADAVIAVSSGMRDDVLRTYPALDPDRVHVVRNGIDTTVWYPAEPGPDESVLAELGVDLNRPIVAFVGRITRQKGVAHLVAAAHRFAPDVQLVLCAGAPDTPQIAEEVSSAVQQLAQARTGVFWVREMLPTHKIREILSAATVFVCPSVYEPLGIVNLEAMACATAVVASDVGGIPEVVADGRTGLLVHYDANDTEAYEARLAEAVNSLVADPDRAREYGVAGRERCIEEFSWAHIAEQTLEIYRKVSA.

It belongs to the glycosyltransferase group 1 family.

The enzyme catalyses ADP-alpha-D-glucose + alpha-D-glucose 1-phosphate = alpha-maltose 1-phosphate + ADP + H(+). It participates in glycan biosynthesis; glycogen biosynthesis. Functionally, involved in the biosynthesis of the maltose-1-phosphate (M1P) building block required for alpha-glucan production by the key enzyme GlgE. Catalyzes the formation of an alpha-1,4 linkage between glucose from ADP-glucose and glucose 1-phosphate (G1P) to yield maltose-1-phosphate (M1P). The sequence is that of Alpha-maltose-1-phosphate synthase from Mycolicibacterium smegmatis (strain ATCC 700084 / mc(2)155) (Mycobacterium smegmatis).